The sequence spans 436 residues: Prenyltransferase nscD (436 aa).

The protein belongs to the tryptophan dimethylallyltransferase family.

It participates in secondary metabolite biosynthesis. Prenyltransferase; part of the gene cluster that mediates the biosynthesis of neosartoricin B, a prenylated anthracenone that probably exhibits T-cell antiproliferative activity, suggestive of a physiological role as an immunosuppressive agent. The non-reducing polyketide synthase nscA probably synthesizes and cyclizes the decaketide backbone. The hydrolase nscB then mediates the product release through hydrolysis followed by spontaneous decarboxylation. The prenyltransferase nscD catalyzes the addition of the dimethylallyl group to the aromatic C5. The FAD-dependent monooxygenase nscC is then responsible for the stereospecific hydroxylation at C2. Neosartoricin B can be converted into two additional compounds neosartoricins C and D. Neosartoricin C is a spirocyclic compound that is cyclized through the attack of C3 hydroxyl on C14, followed by dehydration. On the other hand, neosartoricin D is a further cyclized compound in which attack of C2 on C14 in neosartoricin C results in the formation of the acetal-containing dioxabicyclo-octanone ring. Both of these compounds are novel and possibly represent related metabolites of the gene cluster. The chain is Prenyltransferase nscD from Trichophyton rubrum (strain ATCC MYA-4607 / CBS 118892) (Athlete's foot fungus).